The chain runs to 718 residues: Potassium channel KAT1 (718 aa).

The Cytoplasmic portion of the chain corresponds to 1-60 (MTQAHSKSCFHQFWDGLQIKRSSDSFTVELLPSLGATINHSNKLQKFIISPYDPRYRSWE). The chain crosses the membrane as a helical span at residues 61–81 (LFLIVLVVYSAWICPFELAFL). Over 82–88 (RDLPSKL) the chain is Extracellular. Residues 89-109 (LLVENIVDIFFAIDIVLTFFV) form a helical membrane-spanning segment. Residues 110 to 132 (AYVDSKTHLLVDDRKRIAMRYLS) are Cytoplasmic-facing. The helical transmembrane segment at 133-153 (TWFIFDVCSTAPFQPIILLFT) threads the bilayer. Residues 154-162 (HKGNDIAFK) are Extracellular-facing. A helical; Voltage-sensor transmembrane segment spans residues 163-183 (VLNLLRLWRLHRVSSLFARLE). Over 184 to 197 (KDIRFNYFWTRCSK) the chain is Cytoplasmic. Residues 198–218 (LISVTLFAVHCAGCFNYMIAD) traverse the membrane as a helical segment. Residues 219–245 (RYPNPEKTWIGAVMSTFRSESLWTRYI) lie on the Extracellular side of the membrane. Positions 246–265 (TALYWSITTLTTTGYGDLHA) form an intramembrane region, pore-forming. Residues 266-269 (ENPT) lie on the Extracellular side of the membrane. Residues 270 to 290 (EMLFDIVYMMFNLGLTAYLIG) form a helical membrane-spanning segment. Over 291–718 (NMTNLVVHGT…DGDHLFLLEM (428 aa)) the chain is Cytoplasmic. Residue 374 to 493 (LFNGVSGNFI…NILMNNLVQK (120 aa)) participates in a nucleoside 3',5'-cyclic phosphate binding. Residues 560–584 (EATRSSASENENSSMTDKEENHDEV) are disordered. The span at 562 to 574 (TRSSASENENSSM) shows a compositional bias: polar residues. Residues 575–584 (TDKEENHDEV) show a composition bias toward basic and acidic residues. Positions 647–718 (RVTIHKYRHN…DGDHLFLLEM (72 aa)) constitute a KHA domain.

The protein belongs to the potassium channel family. Plant (TC 1.A.1.4) subfamily.

The protein resides in the membrane. Functionally, probable inward-rectifying potassium channel. Assuming opened or closed conformations in response to the voltage difference across the membrane, the channel is activated by hyperpolarization. The sequence is that of Potassium channel KAT1 from Oryza sativa subsp. japonica (Rice).